The chain runs to 438 residues: Glutamyl-tRNA(Gln) amidotransferase subunit D (438 aa).

Residues Pro92–Asn422 enclose the Asparaginase/glutaminase domain. Active-site residues include Thr102, Thr178, Asp179, and Lys256.

This sequence belongs to the asparaginase 1 family. GatD subfamily. Heterodimer of GatD and GatE.

The enzyme catalyses L-glutamyl-tRNA(Gln) + L-glutamine + ATP + H2O = L-glutaminyl-tRNA(Gln) + L-glutamate + ADP + phosphate + H(+). In terms of biological role, allows the formation of correctly charged Gln-tRNA(Gln) through the transamidation of misacylated Glu-tRNA(Gln) in organisms which lack glutaminyl-tRNA synthetase. The reaction takes place in the presence of glutamine and ATP through an activated gamma-phospho-Glu-tRNA(Gln). The GatDE system is specific for glutamate and does not act on aspartate. This Pyrococcus abyssi (strain GE5 / Orsay) protein is Glutamyl-tRNA(Gln) amidotransferase subunit D.